Here is an 813-residue protein sequence, read N- to C-terminus: Lon protease (813 aa).

The 194-residue stretch at 14-207 (LPLLPLRGII…ILTEILAREM (194 aa)) folds into the Lon N-terminal domain. 359-366 (GPPGVGKT) provides a ligand contact to ATP. One can recognise a Lon proteolytic domain in the interval 595–776 (ESQVGVATGL…DQVIREALLE (182 aa)). Active-site residues include serine 682 and lysine 725.

Belongs to the peptidase S16 family. In terms of assembly, homohexamer. Organized in a ring with a central cavity.

The protein resides in the cytoplasm. The catalysed reaction is Hydrolysis of proteins in presence of ATP.. ATP-dependent serine protease that mediates the selective degradation of mutant and abnormal proteins as well as certain short-lived regulatory proteins. Required for cellular homeostasis and for survival from DNA damage and developmental changes induced by stress. Degrades polypeptides processively to yield small peptide fragments that are 5 to 10 amino acids long. Binds to DNA in a double-stranded, site-specific manner. In Heliobacterium modesticaldum (strain ATCC 51547 / Ice1), this protein is Lon protease.